The primary structure comprises 147 residues: Phosphoribosyl-AMP cyclohydrolase (147 aa).

Asp91 is a binding site for Mg(2+). Position 92 (Cys92) interacts with Zn(2+). Mg(2+) is bound by residues Asp93 and Asp95. Zn(2+) contacts are provided by Cys109 and Cys116.

Belongs to the PRA-CH family. In terms of assembly, homodimer. The cofactor is Mg(2+). It depends on Zn(2+) as a cofactor.

Its subcellular location is the cytoplasm. The enzyme catalyses 1-(5-phospho-beta-D-ribosyl)-5'-AMP + H2O = 1-(5-phospho-beta-D-ribosyl)-5-[(5-phospho-beta-D-ribosylamino)methylideneamino]imidazole-4-carboxamide. The protein operates within amino-acid biosynthesis; L-histidine biosynthesis; L-histidine from 5-phospho-alpha-D-ribose 1-diphosphate: step 3/9. Catalyzes the hydrolysis of the adenine ring of phosphoribosyl-AMP. The sequence is that of Phosphoribosyl-AMP cyclohydrolase from Rhodopseudomonas palustris (strain BisA53).